Reading from the N-terminus, the 264-residue chain is tRNA pseudouridine synthase A (264 aa).

Asp-51 serves as the catalytic Nucleophile. Residue Tyr-109 participates in substrate binding.

This sequence belongs to the tRNA pseudouridine synthase TruA family. Homodimer.

It catalyses the reaction uridine(38/39/40) in tRNA = pseudouridine(38/39/40) in tRNA. Functionally, formation of pseudouridine at positions 38, 39 and 40 in the anticodon stem and loop of transfer RNAs. This is tRNA pseudouridine synthase A from Polaromonas naphthalenivorans (strain CJ2).